Consider the following 660-residue polypeptide: MSSKIQQEIADLKKLIRKWDKEYYVDSLPSVEDFVYDKHILRLQELESKCPEYKTLDSPTLKFGSDLLNDFKEVEHSVPVLSLDKVYNLDLLKSWIDKIDFSNSFNISVEPKIDGCSIVLYYKDGILEKALTRGNGKFGNDVTKNIRTIRHVPLFLGEKVDLVLRGEVYITKENFLKINKFLEKPYTNSRNLASGILRRVDSREVANFPLNIFIYDFLNAGLDFKTNNLAIEKLKKLGFKVNPLIRFFDQKSSIKEVLNYIADITKKRNSFEYEIDGVVLKVSDFALREKLGYTLHHPKWAMAYKFEALSGFSKVNSIVVQVGRSGKITPVANIDKVFVSGAFITNATLHNQDYITSINLNVGDIVKVSRRGDVIPAVEMVINKFSTGFFKVPDKCPSCKTVVVKEGAHFFCTNNNCPSVAVERIKYFCSKNCMDIEGFSDKTISFLFEKKFISSEIDLYTFNFYKLLKFKGFKDRKINNLINSIEASKKKPFSKLLLSIGIKELGENTIRLLFLNNLNSFSKLFRLCQDRDFAFLTLLKIKGIGEKIALNIIDAFNNSIMINKFKVFENLGFKMEERILIDDENKLLVGKKFCITGSFNGYSRPIVIDKLENKGAIFKTCVTKGLDFLVVGEKAGTKLKKALNLNVKIMSFEDIKSYLD.

NAD(+)-binding positions include 33–37 (DFVYD), 82–83 (SL), and Glu110. The active-site N6-AMP-lysine intermediate is Lys112. 4 residues coordinate NAD(+): Arg133, Glu167, Lys281, and Lys305. Residues Cys396, Cys399, Cys412, and Cys417 each coordinate Zn(2+). Positions 583–660 (DENKLLVGKK…SFEDIKSYLD (78 aa)) constitute a BRCT domain.

Belongs to the NAD-dependent DNA ligase family. LigA subfamily. It depends on Mg(2+) as a cofactor. Mn(2+) serves as cofactor.

The enzyme catalyses NAD(+) + (deoxyribonucleotide)n-3'-hydroxyl + 5'-phospho-(deoxyribonucleotide)m = (deoxyribonucleotide)n+m + AMP + beta-nicotinamide D-nucleotide.. Functionally, DNA ligase that catalyzes the formation of phosphodiester linkages between 5'-phosphoryl and 3'-hydroxyl groups in double-stranded DNA using NAD as a coenzyme and as the energy source for the reaction. It is essential for DNA replication and repair of damaged DNA. The sequence is that of DNA ligase from Borreliella afzelii (strain PKo) (Borrelia afzelii).